We begin with the raw amino-acid sequence, 417 residues long: Aminoacyltransferase FemB (417 aa).

Belongs to the FemABX family.

It localises to the cytoplasm. It catalyses the reaction MurNAc-L-Ala-D-isoglutaminyl-L-Lys-(N(6)-tri-Gly)-D-Ala-D-Ala-diphospho-di-trans,octa-cis-undecaprenyl-GlcNAc + 2 glycyl-tRNA(Gly) = MurNAc-L-Ala-D-isoglutaminyl-L-Lys-(N(6)-penta-Gly)-D-Ala-D-Ala-diphospho-di-trans,octa-cis-undecaprenyl-GlcNAc + 2 tRNA(Gly) + 2 H(+). Functionally, catalyzes the incorporation of amino acid(s) into the interchain peptide bridge of peptidoglycan, using aminoacyl-tRNA as amino acid donor. This Staphylococcus epidermidis protein is Aminoacyltransferase FemB (femB).